A 243-amino-acid polypeptide reads, in one-letter code: Terpene cyclase penB (243 aa).

The next 3 membrane-spanning stretches (helical) occupy residues 19–39 (IANI…VGMI), 48–68 (YGMA…YSLI), and 78–98 (GVFI…IKFA). N-linked (GlcNAc...) asparagine glycosylation occurs at N111. The next 4 helical transmembrane spans lie at 112–132 (LSLI…ALAA), 137–157 (SLAY…GGLC), 172–194 (LWLS…WMYW), and 205–225 (LVLW…LCYW).

The protein belongs to the paxB family.

Its subcellular location is the membrane. It functions in the pathway secondary metabolite biosynthesis. Functionally, terpene cyclase; part of the gene cluster that mediates the biosynthesis of the indole diterpenes penitrems. The geranylgeranyl diphosphate (GGPP) synthase penG catalyzes the first step in penitrem biosynthesis via conversion of farnesyl pyrophosphate and isopentyl pyrophosphate into geranylgeranyl pyrophosphate (GGPP). Condensation of indole-3-glycerol phosphate with GGPP by the prenyl transferase penC then forms 3-geranylgeranylindole (3-GGI). Epoxidation by the FAD-dependent monooxygenase penM leads to a epoxidized-GGI that is substrate of the terpene cyclase penB for cyclization to yield paspaline. Paspaline is subsequently converted to 13-desoxypaxilline by the cytochrome P450 monooxygenase penP, the latter being then converted to paxilline by the cytochrome P450 monooxygenase penQ. Paxilline is converted to beta-paxitriol via C-10 ketoreduction by the short-chain dehydrogenase PC-15 which can be monoprenylated at the C-20 by the indole diterpene prenyltransferase penD. A two-step elimination (acetylation and elimination) process performed by the O-acetyltransferase PC-16 and the P.simplicissimum ptmI-ortholog not yet identified in P.crustosum, leads to the production of the prenylated form of penijanthine. The FAD-linked oxidoreductase ptmO then converts the prenylated form of penijanthine into PC-M5 which is in turn transformed into PC-M4 by the aromatic dimethylallyltransferase PC-22. A series of oxidation steps involving 4 cytochrome P450 monooxygenases (PC-21, PC-05, PC-23, PC-20) and a FAD-dependent monooxygenase (PC-14) are required for the transformation of PC-M4 to penitrems A and E. Synthesis of these final products is proposed to proceed via penitrems D and C (PC-21, PC-05, PC-14) and penitrems B and F (PC-21, PC-05, PC-14, PC-23). The chain is Terpene cyclase penB (penB) from Penicillium crustosum (Blue mold fungus).